Reading from the N-terminus, the 62-residue chain is Sperm protamine P1 (62 aa).

The tract at residues 1 to 62 (MARYRRRSRS…RYSRRGRRRY (62 aa)) is disordered.

Belongs to the protamine P1 family. Testis.

It localises to the nucleus. The protein resides in the chromosome. Functionally, protamines substitute for histones in the chromatin of sperm during the haploid phase of spermatogenesis. They compact sperm DNA into a highly condensed, stable and inactive complex. In Sarcophilus harrisii (Tasmanian devil), this protein is Sperm protamine P1 (PRM1).